Here is a 167-residue protein sequence, read N- to C-terminus: uncharacterized protein (167 aa).

The helical transmembrane segment at 4-24 (IIGLFFIIILIVINISILAYD) threads the bilayer.

The protein localises to the membrane. This is an uncharacterized protein from Rickettsia prowazekii (strain Madrid E).